Reading from the N-terminus, the 334-residue chain is MAFNLRNRNFLKLLDFSTKEIQFLLELSAELKKAKYAGTEQKTLQGKNIALIFEKSSTRTRCAFEVAAFDQGAQVTYIGPSGSQIGHKESMKDTARVLGRMYDGIEYRGFGQSIVEELGTHAGVPVWNGLTDEFHPTQILADFLTMQEHSRGKQLHEMTFAYLGDARNNMGNSLMVGAAKMGMDIRLVAPKAFWPEEHLVATCQDIAKQTGAKITLTENVEEGVKGCDFLYTDVWVSMGEAAEAWDERVALMTPYQINMDVIKQTGNPHVKFMHCLPAFHNDETTVGKEIAEKYGMKGLEVTEDVFESEYSIVFDEAENRMHTIKAIMVATLGS.

Carbamoyl phosphate-binding positions include 57–60, glutamine 84, arginine 108, and 135–138; these read STRT and HPTQ. L-ornithine contacts are provided by residues asparagine 169, aspartate 233, and 237-238; that span reads SM. Carbamoyl phosphate is bound by residues 275–276 and arginine 320; that span reads CL.

Belongs to the aspartate/ornithine carbamoyltransferase superfamily. OTCase family.

It localises to the cytoplasm. The catalysed reaction is carbamoyl phosphate + L-ornithine = L-citrulline + phosphate + H(+). The protein operates within amino-acid biosynthesis; L-arginine biosynthesis; L-arginine from L-ornithine and carbamoyl phosphate: step 1/3. In terms of biological role, reversibly catalyzes the transfer of the carbamoyl group from carbamoyl phosphate (CP) to the N(epsilon) atom of ornithine (ORN) to produce L-citrulline. The sequence is that of Ornithine carbamoyltransferase from Vibrio parahaemolyticus serotype O3:K6 (strain RIMD 2210633).